A 78-amino-acid polypeptide reads, in one-letter code: MASLIQVRDLLALRGRMEAAQISQTLNTPQPMINAMLQQLESMGKAVRIQEEPDGCLSGNCKSCPEGKACLREWWALR.

Iron-sulfur cluster-binding residues include C56, C61, C64, and C70.

The protein belongs to the FeoC family.

Functionally, may function as a transcriptional regulator that controls feoABC expression. The protein is Probable [Fe-S]-dependent transcriptional repressor of Escherichia coli O7:K1 (strain IAI39 / ExPEC).